The primary structure comprises 93 residues: Translation initiation factor IF-1 (93 aa).

Residues 1 to 72 (MAKEELIQFE…EKGRLIFRHK (72 aa)) enclose the S1-like domain. The disordered stretch occupies residues 69 to 93 (FRHKDERPSGAPRGGPPRGGQFRRR).

It belongs to the IF-1 family. As to quaternary structure, component of the 30S ribosomal translation pre-initiation complex which assembles on the 30S ribosome in the order IF-2 and IF-3, IF-1 and N-formylmethionyl-tRNA(fMet); mRNA recruitment can occur at any time during PIC assembly.

It localises to the cytoplasm. Functionally, one of the essential components for the initiation of protein synthesis. Stabilizes the binding of IF-2 and IF-3 on the 30S subunit to which N-formylmethionyl-tRNA(fMet) subsequently binds. Helps modulate mRNA selection, yielding the 30S pre-initiation complex (PIC). Upon addition of the 50S ribosomal subunit IF-1, IF-2 and IF-3 are released leaving the mature 70S translation initiation complex. The polypeptide is Translation initiation factor IF-1 (Nitrobacter hamburgensis (strain DSM 10229 / NCIMB 13809 / X14)).